We begin with the raw amino-acid sequence, 701 residues long: Elongation factor G (701 aa).

Residues Ser8–Thr291 enclose the tr-type G domain. Residues Ala17 to Thr24, Asp89 to His93, and Asn143 to Asp146 contribute to the GTP site.

It belongs to the TRAFAC class translation factor GTPase superfamily. Classic translation factor GTPase family. EF-G/EF-2 subfamily.

It localises to the cytoplasm. In terms of biological role, catalyzes the GTP-dependent ribosomal translocation step during translation elongation. During this step, the ribosome changes from the pre-translocational (PRE) to the post-translocational (POST) state as the newly formed A-site-bound peptidyl-tRNA and P-site-bound deacylated tRNA move to the P and E sites, respectively. Catalyzes the coordinated movement of the two tRNA molecules, the mRNA and conformational changes in the ribosome. The chain is Elongation factor G from Pseudomonas fluorescens (strain Pf0-1).